Consider the following 351-residue polypeptide: Anthranilate phosphoribosyltransferase (351 aa).

Residues G80, 83 to 84 (GD), T88, 90 to 93 (NIST), 108 to 116 (KHGNRSITS), and S120 contribute to the 5-phospho-alpha-D-ribose 1-diphosphate site. Residue G80 coordinates anthranilate. S92 contacts Mg(2+). N111 is an anthranilate binding site. R166 is a binding site for anthranilate. Mg(2+) is bound by residues D229 and E230.

This sequence belongs to the anthranilate phosphoribosyltransferase family. In terms of assembly, homodimer. Requires Mg(2+) as cofactor.

The catalysed reaction is N-(5-phospho-beta-D-ribosyl)anthranilate + diphosphate = 5-phospho-alpha-D-ribose 1-diphosphate + anthranilate. The protein operates within amino-acid biosynthesis; L-tryptophan biosynthesis; L-tryptophan from chorismate: step 2/5. Its function is as follows. Catalyzes the transfer of the phosphoribosyl group of 5-phosphorylribose-1-pyrophosphate (PRPP) to anthranilate to yield N-(5'-phosphoribosyl)-anthranilate (PRA). The polypeptide is Anthranilate phosphoribosyltransferase (Chlorobaculum tepidum (strain ATCC 49652 / DSM 12025 / NBRC 103806 / TLS) (Chlorobium tepidum)).